Reading from the N-terminus, the 333-residue chain is Ribosomal protein L11 methyltransferase (333 aa).

S-adenosyl-L-methionine-binding residues include T160, G181, D203, and N267.

The protein belongs to the methyltransferase superfamily. PrmA family.

It is found in the cytoplasm. The catalysed reaction is L-lysyl-[protein] + 3 S-adenosyl-L-methionine = N(6),N(6),N(6)-trimethyl-L-lysyl-[protein] + 3 S-adenosyl-L-homocysteine + 3 H(+). Methylates ribosomal protein L11. In Lachnoclostridium phytofermentans (strain ATCC 700394 / DSM 18823 / ISDg) (Clostridium phytofermentans), this protein is Ribosomal protein L11 methyltransferase.